The primary structure comprises 68 residues: DNA-directed RNA polymerase subunit Rpo10 (68 aa).

Positions 7, 10, 44, and 45 each coordinate Zn(2+).

This sequence belongs to the archaeal Rpo10/eukaryotic RPB10 RNA polymerase subunit family. As to quaternary structure, part of the RNA polymerase complex. Zn(2+) is required as a cofactor.

It localises to the cytoplasm. It catalyses the reaction RNA(n) + a ribonucleoside 5'-triphosphate = RNA(n+1) + diphosphate. Its function is as follows. DNA-dependent RNA polymerase (RNAP) catalyzes the transcription of DNA into RNA using the four ribonucleoside triphosphates as substrates. This Methanococcus maripaludis (strain C6 / ATCC BAA-1332) protein is DNA-directed RNA polymerase subunit Rpo10.